Consider the following 315-residue polypeptide: Glutathione synthetase (315 aa).

An ATP-grasp domain is found at 125 to 310 (KLFTAWFSEF…ITGMLFDAIE (186 aa)). 151-207 (HQAKGDIILKPLDGMGGTSIFRVKQDDPNLGVIIETLTQYGNQYAMAQAFIPEITKG) is an ATP binding site. Mg(2+)-binding residues include Glu281 and Asn283.

It belongs to the prokaryotic GSH synthase family. The cofactor is Mg(2+). Mn(2+) is required as a cofactor.

It carries out the reaction gamma-L-glutamyl-L-cysteine + glycine + ATP = glutathione + ADP + phosphate + H(+). It functions in the pathway sulfur metabolism; glutathione biosynthesis; glutathione from L-cysteine and L-glutamate: step 2/2. The protein is Glutathione synthetase of Shewanella oneidensis (strain ATCC 700550 / JCM 31522 / CIP 106686 / LMG 19005 / NCIMB 14063 / MR-1).